The following is a 233-amino-acid chain: Probable cyclic nucleotide phosphodiesterase COSY_0614 (233 aa).

Fe cation contacts are provided by Asp10, His12, Asp48, Asn78, His144, His183, and His185. AMP contacts are provided by residues His12, Asp48, and 78 to 79; that span reads NH. His185 serves as a coordination point for AMP.

Belongs to the cyclic nucleotide phosphodiesterase class-III family. It depends on Fe(2+) as a cofactor.

The polypeptide is Probable cyclic nucleotide phosphodiesterase COSY_0614 (Vesicomyosocius okutanii subsp. Calyptogena okutanii (strain HA)).